Consider the following 321-residue polypeptide: GDP-L-fucose synthase (321 aa).

Residues 10 to 16 (GHRGMVG), 36 to 41 (RDELNL), and 105 to 108 (LGSS) contribute to the NADP(+) site. The Proton donor/acceptor role is filled by Y136. NADP(+) is bound by residues K140, 163 to 166 (PTNL), and H179. Substrate contacts are provided by R187, W202, R209, and D278.

This sequence belongs to the NAD(P)-dependent epimerase/dehydratase family. Fucose synthase subfamily. Homodimer.

The protein localises to the cytoplasm. It carries out the reaction GDP-beta-L-fucose + NADP(+) = GDP-4-dehydro-alpha-D-rhamnose + NADPH + H(+). Its pathway is nucleotide-sugar biosynthesis; GDP-L-fucose biosynthesis via de novo pathway; GDP-L-fucose from GDP-alpha-D-mannose: step 2/2. It functions in the pathway exopolysaccharide biosynthesis; colanic acid biosynthesis. Subject to product inhibition by NADP and GDP-fucose. Functionally, catalyzes the two-step NADP-dependent conversion of GDP-4-dehydro-6-deoxy-D-mannose to GDP-fucose, involving an epimerase and a reductase reaction. The sequence is that of GDP-L-fucose synthase from Escherichia coli (strain K12).